A 123-amino-acid chain; its full sequence is Histone H2B (123 aa).

Positions 1–31 (MPPKTSGKAAKKAGKAQKNITKNDKKKKRKR) are disordered. Position 2 is an N-methylproline; partial (Pro-2). Lys-44 carries the post-translational modification N6-succinyllysine. O-linked (GlcNAc) serine glycosylation occurs at Ser-110. 2 positions are modified to N6-succinyllysine: Lys-114 and Lys-118. Residue Lys-118 forms a Glycyl lysine isopeptide (Lys-Gly) (interchain with G-Cter in ubiquitin) linkage.

Belongs to the histone H2B family. The nucleosome is a histone octamer containing two molecules each of H2A, H2B, H3 and H4 assembled in one H3-H4 heterotetramer and two H2A-H2B heterodimers. The octamer wraps approximately 147 bp of DNA. Post-translationally, phosphorylated by the catalytic component of the Dbf4-dependent kinase (DDK) complex Cdc7. In terms of processing, monoubiquitination of Lys-118 by Bre1 gives a specific tag for epigenetic transcriptional activation and is also prerequisite for histone H3 'Lys-4' and 'Lys-79' methylation. Deubiquitination of Lys-118 by the SAGA complex is involved in activating transcription of a large subset of genes. Methylation at Pro-2 increases upon heat shock. Post-translationally, glcNAcylation at Ser-110 promotes monoubiquitination of Lys-118. It fluctuates in response to extracellular glucose, and associates with transcribed genes.

It localises to the nucleus. Its subcellular location is the chromosome. Core component of nucleosome. Nucleosomes wrap and compact DNA into chromatin, limiting DNA accessibility to the cellular machineries which require DNA as a template. Histones thereby play a central role in transcription regulation, DNA repair, DNA replication and chromosomal stability. DNA accessibility is regulated via a complex set of post-translational modifications of histones, also called histone code, and nucleosome remodeling. The chain is Histone H2B (His2B) from Drosophila sechellia (Fruit fly).